Here is a 399-residue protein sequence, read N- to C-terminus: Elongation factor Tu (399 aa).

The 195-residue stretch at 10–204 folds into the tr-type G domain; it reads KPHVNIGTIG…AVDSSIPEPE (195 aa). Positions 19–26 are G1; sequence GHVDHGKT. A GTP-binding site is contributed by 19 to 26; that stretch reads GHVDHGKT. Thr26 contacts Mg(2+). Residues 60-64 form a G2 region; that stretch reads GITIN. A G3 region spans residues 81 to 84; sequence DCPG. GTP-binding positions include 81–85 and 136–139; these read DCPGH and NKCD. The interval 136-139 is G4; it reads NKCD. Residues 174–176 are G5; that stretch reads SGL.

The protein belongs to the TRAFAC class translation factor GTPase superfamily. Classic translation factor GTPase family. EF-Tu/EF-1A subfamily. As to quaternary structure, monomer.

Its subcellular location is the cytoplasm. The enzyme catalyses GTP + H2O = GDP + phosphate + H(+). GTP hydrolase that promotes the GTP-dependent binding of aminoacyl-tRNA to the A-site of ribosomes during protein biosynthesis. The sequence is that of Elongation factor Tu from Synechococcus sp. (strain CC9605).